The primary structure comprises 45 residues: Putative potassium channel blocker (45 aa).

Expressed by the venom gland.

It localises to the secreted. Functionally, inhibits potassium channels. In Hottentotta tamulus (Eastern Indian scorpion), this protein is Putative potassium channel blocker.